The chain runs to 179 residues: DELTA-actitoxin-Afr1e (179 aa).

An N-terminal alpha-helix that contributes to the pore region spans residues 1–29; the sequence is SADVAGAVIDGAGLGFDVLKTVLEALGNV. Residues 11-30 are N-terminal region; the sequence is GAGLGFDVLKTVLEALGNVK. An N-(acyl)-sphingosylphosphocholine is bound at residue Arg31. N-acetyl-D-glucosamine 6-sulfate contacts are provided by Tyr51 and Arg53. An N-(acyl)-sphingosylphosphocholine contacts are provided by Arg53, Ser54, Arg79, Gly85, Tyr108, Tyr113, Ser114, Trp116, Tyr133, Tyr137, Tyr138, Arg144, and Gly168. The trp-rich region, which is important for the binding to lipid membrane stretch occupies residues 105 to 120; it reads SVPYDYNWYSNWWNVR. Tyr138 provides a ligand contact to N-acetyl-D-glucosamine 6-sulfate. Positions 144–146 match the Cell attachment site, crucial for protein stability motif; the sequence is RGD.

The protein belongs to the actinoporin family. Sea anemone subfamily. Octamer or nonamer in membranes. Monomer in the soluble state.

It is found in the secreted. It localises to the nematocyst. Its subcellular location is the target cell membrane. In terms of biological role, pore-forming toxin (PFT) that consists of a crown-shaped octamer or nonamer that forms cation-selective hydrophilic pores of about 1.5 nm (inside) and 13 nm (outside) and causes cytolysis. It causes cardiac stimulation. Also causes hemolysis (HC(50)=1.6 nM). Interestingly, the Phe-16 is crucial for hemolysis. Pore formation is a multi-step process that involves specific recognition of membrane sphingomyelin (but neither cholesterol nor phosphatidylcholine) using aromatic rich region and adjacent phosphocholine (POC) binding site, firm binding to the membrane (mainly driven by hydrophobic interactions) accompanied by the transfer of the N-terminal region to the lipid-water interface and finally pore formation after oligomerization of monomers. It is probable that a dimeric form is an assembly intermediate before the complete oligomerization. The formation of stable pores occurs only in vesicles composed of DOPC/SM (there is no oligomerization when the PFT is treated with vesicles of DOPC or SM alone). The transmembrane pore displays 8 lateral perforations, one at each subunit-subunit interface, partially occupied by the acyl-chain region of a bridging lipid. Each pore contains 24 lipid molecules, firmly bound to each subunit, that is, 3 lipids (L1, L2, L3, L4 and/or L5) are associated to each subunit. Lipid L1 bridges 2 subunits, whereas lipids L2 and L3 bind to sites at single subunit. The protein is DELTA-actitoxin-Afr1e of Actinia fragacea (Strawberry anemone).